Consider the following 142-residue polypeptide: MTFSSAEKAAIASLWGKVSGHTDEIGAEALERLFLSYPQTKTYFSHFDLSHGSKDLRSHGGKVVKAIGNAATHIDDIPHALSALSDLHAFKLKVDPGNFKLLSHAIQVTLAIHFPAEFNADAQAAWDKFLAVVSAVLVSKYR.

The region spanning 2–142 (TFSSAEKAAI…VSAVLVSKYR (141 aa)) is the Globin domain. His59 provides a ligand contact to O2. His88 provides a ligand contact to heme b.

This sequence belongs to the globin family. Heterotetramer of two alpha chains and two beta chains. As to expression, red blood cells.

This is a larval (tadpole) alpha-globin. The polypeptide is Hemoglobin subunit alpha-5 (hba5) (Xenopus laevis (African clawed frog)).